Consider the following 98-residue polypeptide: Glutaredoxin 1 (98 aa).

The Glutaredoxin domain occupies Met1–Asp98. A disulfide bridge connects residues Cys17 and Cys20.

The protein belongs to the glutaredoxin family. In terms of assembly, monomer.

It localises to the cytoplasm. In terms of biological role, has a glutathione-disulfide oxidoreductase activity in the presence of NADPH and glutathione reductase. Reduces low molecular weight disulfides and proteins. This is Glutaredoxin 1 (grxC1) from Rickettsia bellii (strain RML369-C).